The primary structure comprises 440 residues: Serine hydroxymethyltransferase (440 aa).

(6S)-5,6,7,8-tetrahydrofolate is bound by residues Leu119 and Gly123–Leu125. Lys228 carries the N6-(pyridoxal phosphate)lysine modification. Ser370–Phe372 contributes to the (6S)-5,6,7,8-tetrahydrofolate binding site.

The protein belongs to the SHMT family. In terms of assembly, homodimer. The cofactor is pyridoxal 5'-phosphate.

Its subcellular location is the cytoplasm. The catalysed reaction is (6R)-5,10-methylene-5,6,7,8-tetrahydrofolate + glycine + H2O = (6S)-5,6,7,8-tetrahydrofolate + L-serine. Its pathway is one-carbon metabolism; tetrahydrofolate interconversion. The protein operates within amino-acid biosynthesis; glycine biosynthesis; glycine from L-serine: step 1/1. Its function is as follows. Catalyzes the reversible interconversion of serine and glycine with tetrahydrofolate (THF) serving as the one-carbon carrier. This reaction serves as the major source of one-carbon groups required for the biosynthesis of purines, thymidylate, methionine, and other important biomolecules. Also exhibits THF-independent aldolase activity toward beta-hydroxyamino acids, producing glycine and aldehydes, via a retro-aldol mechanism. This chain is Serine hydroxymethyltransferase, found in Chlorobium luteolum (strain DSM 273 / BCRC 81028 / 2530) (Pelodictyon luteolum).